We begin with the raw amino-acid sequence, 309 residues long: Shugoshin (309 aa).

The stretch at 42–77 (NLLLKQQVVQCTKTIEKLRNENVALRQKNQELIDGT) forms a coiled coil. 2 disordered regions span residues 165 to 195 (FDNN…KGRR) and 210 to 309 (EEAS…NTFF). Low complexity predominate over residues 167–178 (NNSSQSTSSIQN). Residues 184 to 193 (PRKKQSVGKG) are compositionally biased toward basic residues.

The protein belongs to the shugoshin family. Expressed in gonads.

The protein resides in the nucleus. Its subcellular location is the chromosome. It is found in the centromere. Functionally, component of cell cycle checkpoints, which ensures chromosome segregation during meiosis and mitosis. During meiotic prophase, it is involved in the regulation of the synapsis checkpoint, which monitors whether homologous chromosomes have synapsed, and the DNA damage response. Plays a central role in chromosome cohesion during cell division by preventing premature dissociation of cohesin complex after prophase, when most of cohesin complex dissociates from chromosomes arms. This Caenorhabditis elegans protein is Shugoshin.